Reading from the N-terminus, the 370-residue chain is UDP-N-acetylglucosamine--N-acetylmuramyl-(pentapeptide) pyrophosphoryl-undecaprenol N-acetylglucosamine transferase (370 aa).

Residues Thr-15–Gly-17, Asn-129, Arg-170, Ser-200, Ile-253, and Gln-298 each bind UDP-N-acetyl-alpha-D-glucosamine.

It belongs to the glycosyltransferase 28 family. MurG subfamily.

It is found in the cell inner membrane. It catalyses the reaction di-trans,octa-cis-undecaprenyl diphospho-N-acetyl-alpha-D-muramoyl-L-alanyl-D-glutamyl-meso-2,6-diaminopimeloyl-D-alanyl-D-alanine + UDP-N-acetyl-alpha-D-glucosamine = di-trans,octa-cis-undecaprenyl diphospho-[N-acetyl-alpha-D-glucosaminyl-(1-&gt;4)]-N-acetyl-alpha-D-muramoyl-L-alanyl-D-glutamyl-meso-2,6-diaminopimeloyl-D-alanyl-D-alanine + UDP + H(+). It participates in cell wall biogenesis; peptidoglycan biosynthesis. Its function is as follows. Cell wall formation. Catalyzes the transfer of a GlcNAc subunit on undecaprenyl-pyrophosphoryl-MurNAc-pentapeptide (lipid intermediate I) to form undecaprenyl-pyrophosphoryl-MurNAc-(pentapeptide)GlcNAc (lipid intermediate II). This chain is UDP-N-acetylglucosamine--N-acetylmuramyl-(pentapeptide) pyrophosphoryl-undecaprenol N-acetylglucosamine transferase, found in Salinibacter ruber (strain DSM 13855 / M31).